A 65-amino-acid polypeptide reads, in one-letter code: Alpha-toxin Lqq4 (65 aa).

Residues 3–65 form the LCN-type CS-alpha/beta domain; the sequence is RDAYIADDKN…VPIRIPGKCR (63 aa). The interval 9–13 is specificity module, loop 1; sequence DDKNC. Disulfide bonds link C13–C64, C17–C37, C23–C47, and C27–C49. Specificity module, loop stretches follow at residues 40 to 44 and 57 to 65; these read LGKYG and PIRIPGKCR. The residue at position 65 (R65) is an Arginine amide.

This sequence belongs to the long (4 C-C) scorpion toxin superfamily. Sodium channel inhibitor family. Alpha subfamily. Post-translationally, the recombinant toxin which is used for activity tests is not amidated. However, C-terminal amidation does not appear to play an important role in activity, since the non-amidated recombinant toxin and the native toxin (which is amidated) show similar activities on all sodium channels tested. In terms of tissue distribution, expressed by the venom gland.

The protein localises to the secreted. Its function is as follows. Alpha toxins bind voltage-independently at site-3 of sodium channels (Nav) and inhibit the inactivation of the activated channels, thereby blocking neuronal transmission. Both native and recombinant (non-amidated) toxins inhibit inactivation of Nav1.2/SCN2A (EC(50)=31.2-36.6 nM), Nav1.6/SCN8A (EC(50)=6.9-8.9 nM), and Nav1.7/SCN9A (EC(50)=182.0-260.1 nM). In Leiurus quinquestriatus quinquestriatus (Egyptian scorpion), this protein is Alpha-toxin Lqq4.